The following is a 299-amino-acid chain: Inactive recombination-promoting nuclease-like protein RpnE (299 aa).

The protein belongs to the Rpn/YhgA-like nuclease family.

In terms of biological role, upon expression has no effect on RecA-independent DNA recombination, cell viability or DNA damage. The chain is Inactive recombination-promoting nuclease-like protein RpnE (yfaD) from Escherichia coli (strain K12).